Reading from the N-terminus, the 373-residue chain is UDP-3-O-acylglucosamine N-acyltransferase 2 (373 aa).

The active-site Proton acceptor is His239. The disordered stretch occupies residues 345–373; it reads KTNGKSGQADAPPKVALECHGTTGDAPQG.

Belongs to the transferase hexapeptide repeat family. LpxD subfamily. As to quaternary structure, homotrimer.

It catalyses the reaction a UDP-3-O-[(3R)-3-hydroxyacyl]-alpha-D-glucosamine + a (3R)-hydroxyacyl-[ACP] = a UDP-2-N,3-O-bis[(3R)-3-hydroxyacyl]-alpha-D-glucosamine + holo-[ACP] + H(+). It participates in bacterial outer membrane biogenesis; LPS lipid A biosynthesis. Functionally, catalyzes the N-acylation of UDP-3-O-acylglucosamine using 3-hydroxyacyl-ACP as the acyl donor. Is involved in the biosynthesis of lipid A, a phosphorylated glycolipid that anchors the lipopolysaccharide to the outer membrane of the cell. The protein is UDP-3-O-acylglucosamine N-acyltransferase 2 of Gloeobacter violaceus (strain ATCC 29082 / PCC 7421).